We begin with the raw amino-acid sequence, 315 residues long: D-alanine--D-alanine ligase B (315 aa).

The ATP-grasp domain occupies 109–309 (KKVAAAAGVV…FAELLSWMVE (201 aa)). 135-190 (PMKPPYVVKPVREGSSFGVVIVKEDQPHPPQVIGSADWKYGDEVMVEGYIAGRELT) provides a ligand contact to ATP. Residues aspartate 259, glutamate 276, and asparagine 278 each coordinate Mg(2+).

The protein belongs to the D-alanine--D-alanine ligase family. Requires Mg(2+) as cofactor. Mn(2+) serves as cofactor.

The protein resides in the cytoplasm. It catalyses the reaction 2 D-alanine + ATP = D-alanyl-D-alanine + ADP + phosphate + H(+). Its pathway is cell wall biogenesis; peptidoglycan biosynthesis. In terms of biological role, cell wall formation. The sequence is that of D-alanine--D-alanine ligase B from Brucella melitensis biotype 1 (strain ATCC 23456 / CCUG 17765 / NCTC 10094 / 16M).